The following is a 25-amino-acid chain: Antimicrobial peptide 2 (25 aa).

In terms of tissue distribution, expressed by the skin glands.

It is found in the secreted. Functionally, has very strong antibacterial activity against Gram-positive bacterium S.aureus and very weak activity against Gram-negative bacterium E.coli. The sequence is that of Antimicrobial peptide 2 from Xenopus tropicalis (Western clawed frog).